The chain runs to 197 residues: ATP-dependent Clp protease proteolytic subunit 1 (197 aa).

Ser96 (nucleophile) is an active-site residue. His121 is a catalytic residue.

This sequence belongs to the peptidase S14 family. Fourteen ClpP subunits assemble into 2 heptameric rings which stack back to back to give a disk-like structure with a central cavity, resembling the structure of eukaryotic proteasomes.

It localises to the cytoplasm. It catalyses the reaction Hydrolysis of proteins to small peptides in the presence of ATP and magnesium. alpha-casein is the usual test substrate. In the absence of ATP, only oligopeptides shorter than five residues are hydrolyzed (such as succinyl-Leu-Tyr-|-NHMec, and Leu-Tyr-Leu-|-Tyr-Trp, in which cleavage of the -Tyr-|-Leu- and -Tyr-|-Trp bonds also occurs).. Its function is as follows. Cleaves peptides in various proteins in a process that requires ATP hydrolysis. Has a chymotrypsin-like activity. Plays a major role in the degradation of misfolded proteins. This is ATP-dependent Clp protease proteolytic subunit 1 from Synechococcus sp. (strain ATCC 27144 / PCC 6301 / SAUG 1402/1) (Anacystis nidulans).